The primary structure comprises 356 residues: Probable dual-specificity RNA methyltransferase RlmN (356 aa).

Residue Glu100 is the Proton acceptor of the active site. One can recognise a Radical SAM core domain in the interval 106–340 (TNSRLTTCVS…VSLRASRGLD (235 aa)). A disulfide bond links Cys113 and Cys345. Residues Cys120, Cys124, and Cys127 each contribute to the [4Fe-4S] cluster site. Residues 167 to 168 (GE), Ser197, 226 to 228 (SLH), and Asn302 each bind S-adenosyl-L-methionine. Cys345 functions as the S-methylcysteine intermediate in the catalytic mechanism.

Belongs to the radical SAM superfamily. RlmN family. [4Fe-4S] cluster is required as a cofactor.

The protein localises to the cytoplasm. The enzyme catalyses adenosine(2503) in 23S rRNA + 2 reduced [2Fe-2S]-[ferredoxin] + 2 S-adenosyl-L-methionine = 2-methyladenosine(2503) in 23S rRNA + 5'-deoxyadenosine + L-methionine + 2 oxidized [2Fe-2S]-[ferredoxin] + S-adenosyl-L-homocysteine. The catalysed reaction is adenosine(37) in tRNA + 2 reduced [2Fe-2S]-[ferredoxin] + 2 S-adenosyl-L-methionine = 2-methyladenosine(37) in tRNA + 5'-deoxyadenosine + L-methionine + 2 oxidized [2Fe-2S]-[ferredoxin] + S-adenosyl-L-homocysteine. Functionally, specifically methylates position 2 of adenine 2503 in 23S rRNA and position 2 of adenine 37 in tRNAs. This is Probable dual-specificity RNA methyltransferase RlmN from Prochlorococcus marinus (strain MIT 9211).